The sequence spans 259 residues: Phosphate import ATP-binding protein PstB (259 aa).

An ABC transporter domain is found at 2-248 (GQRIDVNHEN…ITMFNNPQNE (247 aa)). An ATP-binding site is contributed by 37–44 (GPSGCGKS).

This sequence belongs to the ABC transporter superfamily. Phosphate importer (TC 3.A.1.7) family. As to quaternary structure, the complex is composed of two ATP-binding proteins (PstB), two transmembrane proteins (PstC and PstA) and a solute-binding protein (PstS).

It localises to the cell membrane. The catalysed reaction is phosphate(out) + ATP + H2O = ADP + 2 phosphate(in) + H(+). Functionally, part of the ABC transporter complex PstSACB involved in phosphate import. Responsible for energy coupling to the transport system. The sequence is that of Phosphate import ATP-binding protein PstB from Bifidobacterium longum (strain NCC 2705).